We begin with the raw amino-acid sequence, 141 residues long: Large ribosomal subunit protein bL17 (141 aa).

This sequence belongs to the bacterial ribosomal protein bL17 family. Part of the 50S ribosomal subunit. Contacts protein L32.

The protein is Large ribosomal subunit protein bL17 of Agrobacterium fabrum (strain C58 / ATCC 33970) (Agrobacterium tumefaciens (strain C58)).